A 511-amino-acid chain; its full sequence is V-type proton ATPase subunit B, brain isoform (511 aa).

An ATP-binding site is contributed by Arg400.

Belongs to the ATPase alpha/beta chains family. In terms of assembly, V-ATPase is a heteromultimeric enzyme made up of two complexes: the ATP-hydrolytic V1 complex and the proton translocation V0 complex. The V1 complex consists of three catalytic AB heterodimers that form a heterohexamer, three peripheral stalks each consisting of EG heterodimers, one central rotor including subunits D and F, and the regulatory subunits C and H. The proton translocation complex V0 consists of the proton transport subunit a, a ring of proteolipid subunits c9c'', rotary subunit d, subunits e and f, and the accessory subunits ATP6AP1/Ac45 and ATP6AP2/PRR. In terms of tissue distribution, kidney; localizes to early distal nephron, encompassing thick ascending limbs and distal convoluted tubules (at protein level).

It is found in the apical cell membrane. The protein resides in the melanosome. Its subcellular location is the cytoplasm. The protein localises to the cytoplasmic vesicle. It localises to the secretory vesicle. It is found in the synaptic vesicle membrane. The protein resides in the clathrin-coated vesicle membrane. Non-catalytic subunit of the V1 complex of vacuolar(H+)-ATPase (V-ATPase), a multisubunit enzyme composed of a peripheral complex (V1) that hydrolyzes ATP and a membrane integral complex (V0) that translocates protons. V-ATPase is responsible for acidifying and maintaining the pH of intracellular compartments and in some cell types, is targeted to the plasma membrane, where it is responsible for acidifying the extracellular environment. In renal intercalated cells, can partially compensate the lack of ATP6V1B1 and mediate secretion of protons (H+) into the urine under base-line conditions but not in conditions of acid load. The polypeptide is V-type proton ATPase subunit B, brain isoform (ATP6V1B2) (Homo sapiens (Human)).